A 466-amino-acid chain; its full sequence is Soluble pyridine nucleotide transhydrogenase (466 aa).

36-45 is a binding site for FAD; sequence ERYHNVGGGC.

Belongs to the class-I pyridine nucleotide-disulfide oxidoreductase family. It depends on FAD as a cofactor.

It is found in the cytoplasm. The enzyme catalyses NAD(+) + NADPH = NADH + NADP(+). Its function is as follows. Conversion of NADPH, generated by peripheral catabolic pathways, to NADH, which can enter the respiratory chain for energy generation. The sequence is that of Soluble pyridine nucleotide transhydrogenase from Citrobacter koseri (strain ATCC BAA-895 / CDC 4225-83 / SGSC4696).